Here is a 508-residue protein sequence, read N- to C-terminus: 2,3-bisphosphoglycerate-independent phosphoglycerate mutase (508 aa).

Mn(2+) contacts are provided by aspartate 11 and serine 61. Catalysis depends on serine 61, which acts as the Phosphoserine intermediate. Substrate-binding positions include histidine 122, arginine 150 to aspartate 151, arginine 182, arginine 188, arginine 257 to arginine 260, and lysine 332. Mn(2+) contacts are provided by aspartate 397, histidine 401, aspartate 438, histidine 439, and histidine 456.

The protein belongs to the BPG-independent phosphoglycerate mutase family. Monomer. Mn(2+) serves as cofactor.

It catalyses the reaction (2R)-2-phosphoglycerate = (2R)-3-phosphoglycerate. The protein operates within carbohydrate degradation; glycolysis; pyruvate from D-glyceraldehyde 3-phosphate: step 3/5. In terms of biological role, catalyzes the interconversion of 2-phosphoglycerate and 3-phosphoglycerate. This chain is 2,3-bisphosphoglycerate-independent phosphoglycerate mutase, found in Mycoplasma pneumoniae (strain ATCC 29342 / M129 / Subtype 1) (Mycoplasmoides pneumoniae).